Consider the following 598-residue polypeptide: Elongation factor 4 (598 aa).

In terms of domain architecture, tr-type G spans 5-187; it reads SHIRNFSIIA…RLVATIPAPI (183 aa). GTP contacts are provided by residues 17-22 and 134-137; these read DHGKST and NKID.

The protein belongs to the TRAFAC class translation factor GTPase superfamily. Classic translation factor GTPase family. LepA subfamily.

The protein localises to the cell inner membrane. It catalyses the reaction GTP + H2O = GDP + phosphate + H(+). Required for accurate and efficient protein synthesis under certain stress conditions. May act as a fidelity factor of the translation reaction, by catalyzing a one-codon backward translocation of tRNAs on improperly translocated ribosomes. Back-translocation proceeds from a post-translocation (POST) complex to a pre-translocation (PRE) complex, thus giving elongation factor G a second chance to translocate the tRNAs correctly. Binds to ribosomes in a GTP-dependent manner. The polypeptide is Elongation factor 4 (Pseudomonas fluorescens (strain Pf0-1)).